We begin with the raw amino-acid sequence, 88 residues long: UPF0297 protein Cphy_2298 (88 aa).

The protein belongs to the UPF0297 family.

The chain is UPF0297 protein Cphy_2298 from Lachnoclostridium phytofermentans (strain ATCC 700394 / DSM 18823 / ISDg) (Clostridium phytofermentans).